The sequence spans 365 residues: Phosphoserine aminotransferase (365 aa).

Arg40 serves as a coordination point for L-glutamate. Pyridoxal 5'-phosphate contacts are provided by residues 74 to 75 (AS), Phe99, Thr155, Asp177, and Gln200. An N6-(pyridoxal phosphate)lysine modification is found at Lys201. 241–242 (NT) contacts pyridoxal 5'-phosphate.

This sequence belongs to the class-V pyridoxal-phosphate-dependent aminotransferase family. SerC subfamily. In terms of assembly, homodimer. It depends on pyridoxal 5'-phosphate as a cofactor.

Its subcellular location is the cytoplasm. It catalyses the reaction O-phospho-L-serine + 2-oxoglutarate = 3-phosphooxypyruvate + L-glutamate. The enzyme catalyses 4-(phosphooxy)-L-threonine + 2-oxoglutarate = (R)-3-hydroxy-2-oxo-4-phosphooxybutanoate + L-glutamate. The protein operates within amino-acid biosynthesis; L-serine biosynthesis; L-serine from 3-phospho-D-glycerate: step 2/3. In terms of biological role, catalyzes the reversible conversion of 3-phosphohydroxypyruvate to phosphoserine and of 3-hydroxy-2-oxo-4-phosphonooxybutanoate to phosphohydroxythreonine. This chain is Phosphoserine aminotransferase, found in Lactococcus lactis subsp. lactis (strain IL1403) (Streptococcus lactis).